We begin with the raw amino-acid sequence, 138 residues long: Large ribosomal subunit protein uL16 (138 aa).

This sequence belongs to the universal ribosomal protein uL16 family. In terms of assembly, part of the 50S ribosomal subunit.

Its function is as follows. Binds 23S rRNA and is also seen to make contacts with the A and possibly P site tRNAs. This is Large ribosomal subunit protein uL16 from Chlamydia felis (strain Fe/C-56) (Chlamydophila felis).